Consider the following 729-residue polypeptide: Cytoplasmic polyadenylation element-binding protein 4 (729 aa).

2 disordered regions span residues Phe20–Ala50 and Glu78–Leu133. Basic residues predominate over residues Phe24–Gln35. Low complexity predominate over residues Gln83 to Leu96. Residues Ser97, Ser99, and Ser137 each carry the phosphoserine modification. A disordered region spans residues Phe218 to Gly324. Positions His232–Gln249 are enriched in basic residues. Phosphoserine occurs at positions 252 and 255. Positions Trp285–Ser300 are enriched in low complexity. Gly residues predominate over residues Pro301–Ala311. Thr326 is modified (phosphothreonine). Phosphoserine occurs at positions 330 and 332. RRM domains are found at residues Arg472–Leu563 and Lys580–Leu662. The segment at Lys541–Tyr543 is RNA-binding. The Zn(2+) site is built by Cys667, Cys675, Cys684, Cys689, Cys694, Cys697, His702, and His710.

This sequence belongs to the RRM CPEB family. As to quaternary structure, interacts with TOB1. In terms of tissue distribution, highly expressed in brain, including hippocampus, amygdala, granule and Purkinje cells of the cerebellum (at protein level). Expressed in spinal cord (at protein level). Expressed in kidney, lung and heart (at protein level). Expressed in liver (at protein level). Expressed in spleen and testis (at protein level). Weakly expressed in ovary and in granular cells of dentate gyrus and the pyramidal cells of CA3 and CA1 of the hippocampus.

The protein localises to the cytoplasm. It is found in the cell projection. Its subcellular location is the dendrite. The protein resides in the dendritic spine. It localises to the postsynaptic density. The protein localises to the axon. It is found in the growth cone. Its subcellular location is the endoplasmic reticulum. The protein resides in the perinuclear region. In terms of biological role, sequence-specific RNA-binding protein that binds to the cytoplasmic polyadenylation element (CPE), an uridine-rich sequence element (consensus sequence 5'-UUUUUAU-3') within the mRNA 3'-UTR. RNA binding results in a clear conformational change analogous to the Venus fly trap mechanism. Regulates activation of unfolded protein response (UPR) in the process of adaptation to ER stress in liver, by maintaining translation of CPE-regulated mRNAs in conditions in which global protein synthesis is inhibited. Required for cell cycle progression, specifically for cytokinesis and chromosomal segregation. Plays a role as an oncogene promoting tumor growth and progression by positively regulating translation of t-plasminogen activator/PLAT. Stimulates proliferation of melanocytes. In contrast to CPEB1 and CPEB3, does not play role in synaptic plasticity, learning and memory. This chain is Cytoplasmic polyadenylation element-binding protein 4 (Cpeb4), found in Mus musculus (Mouse).